A 73-amino-acid chain; its full sequence is Translation initiation factor IF-1 (73 aa).

Residues 1-73 (MSKKKDVIEM…TRGRITYRYK (73 aa)) form the S1-like domain.

Belongs to the IF-1 family. Component of the 30S ribosomal translation pre-initiation complex which assembles on the 30S ribosome in the order IF-2 and IF-3, IF-1 and N-formylmethionyl-tRNA(fMet); mRNA recruitment can occur at any time during PIC assembly.

It is found in the cytoplasm. Functionally, one of the essential components for the initiation of protein synthesis. Stabilizes the binding of IF-2 and IF-3 on the 30S subunit to which N-formylmethionyl-tRNA(fMet) subsequently binds. Helps modulate mRNA selection, yielding the 30S pre-initiation complex (PIC). Upon addition of the 50S ribosomal subunit IF-1, IF-2 and IF-3 are released leaving the mature 70S translation initiation complex. In Roseiflexus castenholzii (strain DSM 13941 / HLO8), this protein is Translation initiation factor IF-1.